The sequence spans 533 residues: Phosphoenolpyruvate carboxykinase (ATP) (533 aa).

3 residues coordinate substrate: Arg-59, Tyr-199, and Lys-205. ATP contacts are provided by residues Lys-205, His-224, and 240–248 (GLSGTGKTT). Positions 205 and 224 each coordinate Mn(2+). Asp-261 contributes to the Mn(2+) binding site. ATP is bound by residues Glu-289, Arg-325, 441–442 (RI), and Thr-447. Arg-325 contacts substrate.

It belongs to the phosphoenolpyruvate carboxykinase (ATP) family. As to quaternary structure, monomer. It depends on Mn(2+) as a cofactor.

The protein localises to the cytoplasm. The enzyme catalyses oxaloacetate + ATP = phosphoenolpyruvate + ADP + CO2. Its pathway is carbohydrate biosynthesis; gluconeogenesis. Functionally, involved in the gluconeogenesis. Catalyzes the conversion of oxaloacetate (OAA) to phosphoenolpyruvate (PEP) through direct phosphoryl transfer between the nucleoside triphosphate and OAA. The chain is Phosphoenolpyruvate carboxykinase (ATP) from Idiomarina loihiensis (strain ATCC BAA-735 / DSM 15497 / L2-TR).